We begin with the raw amino-acid sequence, 427 residues long: Male abnormal protein mab-31 (427 aa).

A disordered region spans residues Pro-68–Lys-102.

It localises to the nucleus. Putative transcription factor. Acts in a TGF-beta-like pathway during development of male-specific genital sensilla (simple sense organs), known as rays. Involved in production of reactive oxygen species (ROS), acting downstream of the TGF-beta-like dbl-1 signaling pathway. Involved in locomotory behavior. The polypeptide is Male abnormal protein mab-31 (Caenorhabditis elegans).